Reading from the N-terminus, the 180-residue chain is NADH-quinone oxidoreductase subunit B (180 aa).

Residues cysteine 59, cysteine 60, cysteine 124, and cysteine 154 each contribute to the [4Fe-4S] cluster site.

Belongs to the complex I 20 kDa subunit family. As to quaternary structure, NDH-1 is composed of 14 different subunits. Subunits NuoB, C, D, E, F, and G constitute the peripheral sector of the complex. The cofactor is [4Fe-4S] cluster.

The protein localises to the cell inner membrane. It carries out the reaction a quinone + NADH + 5 H(+)(in) = a quinol + NAD(+) + 4 H(+)(out). NDH-1 shuttles electrons from NADH, via FMN and iron-sulfur (Fe-S) centers, to quinones in the respiratory chain. The immediate electron acceptor for the enzyme in this species is believed to be ubiquinone. Couples the redox reaction to proton translocation (for every two electrons transferred, four hydrogen ions are translocated across the cytoplasmic membrane), and thus conserves the redox energy in a proton gradient. This chain is NADH-quinone oxidoreductase subunit B, found in Beijerinckia indica subsp. indica (strain ATCC 9039 / DSM 1715 / NCIMB 8712).